We begin with the raw amino-acid sequence, 305 residues long: Aspartate carbamoyltransferase catalytic subunit (305 aa).

Arg60 and Thr61 together coordinate carbamoyl phosphate. Lys88 provides a ligand contact to L-aspartate. Carbamoyl phosphate-binding residues include Arg110, His138, and Gln141. L-aspartate is bound by residues Arg171 and Arg222. Ala263 and Pro264 together coordinate carbamoyl phosphate.

It belongs to the aspartate/ornithine carbamoyltransferase superfamily. ATCase family. Heterododecamer (2C3:3R2) of six catalytic PyrB chains organized as two trimers (C3), and six regulatory PyrI chains organized as three dimers (R2).

The enzyme catalyses carbamoyl phosphate + L-aspartate = N-carbamoyl-L-aspartate + phosphate + H(+). It functions in the pathway pyrimidine metabolism; UMP biosynthesis via de novo pathway; (S)-dihydroorotate from bicarbonate: step 2/3. Functionally, catalyzes the condensation of carbamoyl phosphate and aspartate to form carbamoyl aspartate and inorganic phosphate, the committed step in the de novo pyrimidine nucleotide biosynthesis pathway. The chain is Aspartate carbamoyltransferase catalytic subunit from Halalkalibacterium halodurans (strain ATCC BAA-125 / DSM 18197 / FERM 7344 / JCM 9153 / C-125) (Bacillus halodurans).